The following is a 330-amino-acid chain: Methionine import ATP-binding protein MetN (330 aa).

An ABC transporter domain is found at 2–241; that stretch reads IAFRGVSKVY…PSTRLHQLCF (240 aa). Residue 38-45 coordinates ATP; the sequence is GQSGAGKS.

It belongs to the ABC transporter superfamily. Methionine importer (TC 3.A.1.24) family. The complex is composed of two ATP-binding proteins (MetN), two transmembrane proteins (MetI) and a solute-binding protein (MetQ).

It is found in the cell inner membrane. The catalysed reaction is L-methionine(out) + ATP + H2O = L-methionine(in) + ADP + phosphate + H(+). It catalyses the reaction D-methionine(out) + ATP + H2O = D-methionine(in) + ADP + phosphate + H(+). Functionally, part of the ABC transporter complex MetNIQ involved in methionine import. Responsible for energy coupling to the transport system. The sequence is that of Methionine import ATP-binding protein MetN from Myxococcus xanthus (strain DK1622).